A 178-amino-acid polypeptide reads, in one-letter code: uncharacterized protein (178 aa).

The N-terminal stretch at 1-23 is a signal peptide; the sequence is MNYSVIWAITILILGLVLTLAWA.

This is an uncharacterized protein from Invertebrate iridescent virus 3 (IIV-3).